The following is a 237-amino-acid chain: MVIMLIFASSTGTILPSKKAKSMEKDFSIFQGNKLNLKYKRQREEVMQKKHRLIFLATVLAGLILFYFGVDTWMKQKQVQQNQPPPIVIKPVAPVKPKTQESNQTTKKEVKQEEQKKEEPKKMVQKQETQEKREVKKSEKNEVKQTQEKKDVKVAKKVPKTEKKAANLRTYKFQVGAFRYRENAYKMAKIVRSKGFDAQVVKVGSLYRVYAYVKAKNYWEAKREIKKHFKDAIFVRK.

Residues 53–70 form a helical membrane-spanning segment; that stretch reads LIFLATVLAGLILFYFGV. A disordered region spans residues 85–155; sequence PPIVIKPVAP…TQEKKDVKVA (71 aa). Positions 98–157 form a coiled coil; sequence KTQESNQTTKKEVKQEEQKKEEPKKMVQKQETQEKREVKKSEKNEVKQTQEKKDVKVAKK. Composition is skewed to basic and acidic residues over residues 106 to 122 and 128 to 155; these read TKKEVKQEEQKKEEPKK and ETQEKREVKKSEKNEVKQTQEKKDVKVA. Positions 165 to 237 constitute an SPOR domain; it reads AANLRTYKFQ…HFKDAIFVRK (73 aa).

Its subcellular location is the membrane. This is an uncharacterized protein from Aquifex aeolicus (strain VF5).